The sequence spans 1736 residues: Centrosomal protein of 152 kDa (1736 aa).

The tract at residues 1–60 (MSLEFGSVALQTQNEDEEFDKEDFEREKELQQLLTDLPHDMLDDELSSPERHDSDCSMDG) is interaction with PLK4. Positions 1–127 (MSLEFGSVAL…SGYSPPGKRE (127 aa)) are disordered. Composition is skewed to basic and acidic residues over residues 61 to 82 (RAAEPHPSEHLERKWIERDILP) and 94 to 105 (EENRSKTEDQHL). Coiled coils occupy residues 228–481 (IIQL…AELG), 552–651 (HLVS…QEFD), 692–776 (LEVY…TERQ), 835–868 (AAVSKAEAAAVLAEEQARQVQQEKELATKEALRK), 950–1075 (NVMS…YEED), and 1205–1315 (GHCF…KIKR). Residues 571-592 (FQQSKDGDSGMETKTDTSEKTT) are disordered. Residues 575–592 (KDGDSGMETKTDTSEKTT) show a composition bias toward basic and acidic residues. Thr-1277 is subject to Phosphothreonine. 4 disordered regions span residues 1416-1479 (GTER…ASTA), 1543-1562 (EKNSSPRCISESRHTTLRSP), 1574-1614 (GSPT…SDST), and 1677-1736 (QQGK…SPLE). Over residues 1462–1473 (RRLEESKHREMR) the composition is skewed to basic and acidic residues. 2 stretches are compositionally biased toward polar residues: residues 1576 to 1595 (PTETDSIASEKSQGVGSQDS) and 1603 to 1614 (PSSSPAWPSDST). Position 1714 is an N6-acetyllysine (Lys-1714).

This sequence belongs to the CEP152 family. In terms of assembly, interacts (via N-terminus) with PLK4; the interaction is mutally exclusive with a PLK4:CEP192 interaction. Interacts (via C-terminus) with CPAP (via-N-terminus). Interacts with CINP. Interacts with CDK5RAP2, WDR62, CEP63 and CEP131. CEP63, CDK5RAP2, CEP152, WDR62 are proposed to form a stepwise assembled complex at the centrosome forming a ring near parental centrioles. Interacts with DEUP1; this interaction recruits CEP152 to the deuterosome. The interactions with CEP63 and DEUP1 are mutually exclusive. Interacts with CCDC66.

It is found in the cytoplasm. Its subcellular location is the cytoskeleton. It localises to the microtubule organizing center. The protein localises to the centrosome. The protein resides in the centriole. Its function is as follows. Necessary for centrosome duplication; the function also seems to involve CEP63, CDK5RAP2 and WDR62 through a stepwise assembled complex at the centrosome that recruits CDK2 required for centriole duplication. Acts as a molecular scaffold facilitating the interaction of PLK4 and CPAP, 2 molecules involved in centriole formation. Proposed to snatch PLK4 away from PLK4:CEP92 complexes in early G1 daughter centriole and to reposition PLK4 at the outer boundary of a newly forming CEP152 ring structure. Also plays a key role in deuterosome-mediated centriole amplification in multiciliated that can generate more than 100 centrioles. Overexpression of cep152 can drive amplification of centrioles. This is Centrosomal protein of 152 kDa (Cep152) from Mus musculus (Mouse).